The following is a 918-amino-acid chain: E3 ubiquitin-protein ligase CBL-B-A (918 aa).

Residues 1 to 18 are compositionally biased toward low complexity; sequence MASGSGSSSSTSSSALSG. Residues 1–27 are disordered; sequence MASGSGSSSSTSSSALSGRLPGSRSAN. The segment at 46–178 is 4H; it reads PPKQAAADRR…KAIFPSGQFQ (133 aa). A Cbl-PTB domain is found at 46–354; sequence PPKQAAADRR…GRSYNPDLTG (309 aa). The tract at residues 179-251 is EF-hand-like; that stretch reads GDNFRITKAD…FEFDIFTRLF (73 aa). Residues D232, T234, N236, Y238, and E243 each contribute to the Ca(2+) site. The segment at 252 to 354 is SH2-like; sequence QPWGSILRNW…GRSYNPDLTG (103 aa). Residue R297 coordinates 4-O-phospho-L-tyrosine. A linker region spans residues 355–383; that stretch reads LCEPTPHDHIKVTQEQYELYCEMGSTFQL. The RING-type zinc finger occupies 384–423; that stretch reads CKICAENDKDVKIEPCGHLMCTSCLTSWQESDGQGCPFCR. Disordered regions lie at residues 481-582, 780-831, and 857-918; these read NERQ…RTCR, FPPA…PPAR, and HSDP…MRPT. The span at 483–497 shows a compositional bias: polar residues; sequence RQNSPVTSPGSSPLS. Composition is skewed to pro residues over residues 554–576 and 821–830; these read LPAP…PIPP and PSQPPPPPPA. A compositionally biased stretch (polar residues) spans 898–918; it reads KASNTKGELLLPNQNLIMRPT.

Interacts with several SH3 domain-containing proteins and with poly-ubiquitinated proteins.

Its subcellular location is the cytoplasm. The enzyme catalyses S-ubiquitinyl-[E2 ubiquitin-conjugating enzyme]-L-cysteine + [acceptor protein]-L-lysine = [E2 ubiquitin-conjugating enzyme]-L-cysteine + N(6)-ubiquitinyl-[acceptor protein]-L-lysine.. It participates in protein modification; protein ubiquitination. Functionally, E3 ubiquitin-protein ligase which accepts ubiquitin from specific E2 ubiquitin-conjugating enzymes, and transfers it to substrates, generally promoting their degradation by the proteasome. The protein is E3 ubiquitin-protein ligase CBL-B-A (cblb-a) of Xenopus laevis (African clawed frog).